Here is a 472-residue protein sequence, read N- to C-terminus: Adenosylhomocysteinase (472 aa).

Substrate contacts are provided by threonine 62, aspartate 137, and glutamate 197. 198–200 (TTT) is a binding site for NAD(+). 2 residues coordinate substrate: lysine 227 and aspartate 231. NAD(+)-binding positions include asparagine 232, 261–266 (GYGDVG), glutamate 284, asparagine 319, 340–342 (IGH), and asparagine 385.

This sequence belongs to the adenosylhomocysteinase family. It depends on NAD(+) as a cofactor.

It localises to the cytoplasm. It carries out the reaction S-adenosyl-L-homocysteine + H2O = L-homocysteine + adenosine. The protein operates within amino-acid biosynthesis; L-homocysteine biosynthesis; L-homocysteine from S-adenosyl-L-homocysteine: step 1/1. Its function is as follows. May play a key role in the regulation of the intracellular concentration of adenosylhomocysteine. The polypeptide is Adenosylhomocysteinase (Bordetella bronchiseptica (strain ATCC BAA-588 / NCTC 13252 / RB50) (Alcaligenes bronchisepticus)).